Consider the following 160-residue polypeptide: Type IV major fimbrial protein FimA (160 aa).

A propeptide spans 1–7 (MKSLQKG) (leader sequence). F8 bears the N-methylphenylalanine mark. A helical membrane pass occupies residues 8–28 (FTLIELMIVVAIIGILAAFAI). An intrachain disulfide couples C63 to C105.

This sequence belongs to the N-Me-Phe pilin family. As to quaternary structure, the pili are polar flexible filaments of about 5.4 nanometers diameter and 2.5 micrometers average length; they consist of only a single polypeptide chain arranged in a helical configuration of five subunits per turn in the assembled pilus.

It is found in the fimbrium. The protein resides in the membrane. Its function is as follows. Major component of the type IV fimbriae that plays an essential role in twitching motility, natural transformation, and protease secretion. The protein is Type IV major fimbrial protein FimA (fimA) of Dichelobacter nodosus (Bacteroides nodosus).